The chain runs to 384 residues: Carbamoyl phosphate synthase small chain (384 aa).

The tract at residues 1 to 189 is CPSase; it reads MSKSALLVLE…GLPEAKDDSE (189 aa). Residues Ser-47, Gly-241, and Gly-243 each contribute to the L-glutamine site. In terms of domain architecture, Glutamine amidotransferase type-1 spans 193–380; sequence HVVAYDFGAK…IELIKLSVNE (188 aa). Residue Cys-269 is the Nucleophile of the active site. Residues Leu-270, Gln-273, Asn-311, Gly-313, and Phe-314 each contribute to the L-glutamine site. Active-site residues include His-353 and Glu-355.

Belongs to the CarA family. Composed of two chains; the small (or glutamine) chain promotes the hydrolysis of glutamine to ammonia, which is used by the large (or ammonia) chain to synthesize carbamoyl phosphate. Tetramer of heterodimers (alpha,beta)4.

It carries out the reaction hydrogencarbonate + L-glutamine + 2 ATP + H2O = carbamoyl phosphate + L-glutamate + 2 ADP + phosphate + 2 H(+). The catalysed reaction is L-glutamine + H2O = L-glutamate + NH4(+). The protein operates within amino-acid biosynthesis; L-arginine biosynthesis; carbamoyl phosphate from bicarbonate: step 1/1. It participates in pyrimidine metabolism; UMP biosynthesis via de novo pathway; (S)-dihydroorotate from bicarbonate: step 1/3. Its function is as follows. Small subunit of the glutamine-dependent carbamoyl phosphate synthetase (CPSase). CPSase catalyzes the formation of carbamoyl phosphate from the ammonia moiety of glutamine, carbonate, and phosphate donated by ATP, constituting the first step of 2 biosynthetic pathways, one leading to arginine and/or urea and the other to pyrimidine nucleotides. The small subunit (glutamine amidotransferase) binds and cleaves glutamine to supply the large subunit with the substrate ammonia. This Photobacterium profundum (strain SS9) protein is Carbamoyl phosphate synthase small chain.